The primary structure comprises 142 residues: Small ribosomal subunit protein bS6 (142 aa).

The segment covering 110–133 (NKKPSHAKEKHEKTEHTHSHHTEE) has biased composition (basic and acidic residues). The disordered stretch occupies residues 110–142 (NKKPSHAKEKHEKTEHTHSHHTEETESVGSHSK).

Belongs to the bacterial ribosomal protein bS6 family.

In terms of biological role, binds together with bS18 to 16S ribosomal RNA. This chain is Small ribosomal subunit protein bS6, found in Helicobacter pylori (strain Shi470).